The primary structure comprises 389 residues: Putative F-box protein At1g47790 (389 aa).

One can recognise an F-box domain in the interval 19–65; it reads SKPTSSFPLDLASEILLRLPVKSVVRFRCVSKLWSSIITDPYFIKTY.

This Arabidopsis thaliana (Mouse-ear cress) protein is Putative F-box protein At1g47790.